The following is a 171-amino-acid chain: NADH-quinone oxidoreductase subunit B 2 (171 aa).

Positions 37, 38, 102, and 132 each coordinate [4Fe-4S] cluster.

It belongs to the complex I 20 kDa subunit family. NDH-1 is composed of 14 different subunits. Subunits NuoB, C, D, E, F, and G constitute the peripheral sector of the complex. Requires [4Fe-4S] cluster as cofactor.

The protein resides in the cell inner membrane. It carries out the reaction a quinone + NADH + 5 H(+)(in) = a quinol + NAD(+) + 4 H(+)(out). NDH-1 shuttles electrons from NADH, via FMN and iron-sulfur (Fe-S) centers, to quinones in the respiratory chain. Couples the redox reaction to proton translocation (for every two electrons transferred, four hydrogen ions are translocated across the cytoplasmic membrane), and thus conserves the redox energy in a proton gradient. The protein is NADH-quinone oxidoreductase subunit B 2 of Chromobacterium violaceum (strain ATCC 12472 / DSM 30191 / JCM 1249 / CCUG 213 / NBRC 12614 / NCIMB 9131 / NCTC 9757 / MK).